A 684-amino-acid polypeptide reads, in one-letter code: DNA ligase (684 aa).

Residues 46-50, 100-101, and E130 contribute to the NAD(+) site; these read DYVYD and SL. K132 (N6-AMP-lysine intermediate) is an active-site residue. NAD(+) contacts are provided by R153, E187, K303, and K327. Zn(2+)-binding residues include C421, C424, C439, and C444. The BRCT domain occupies 604-684; that stretch reads DEKNYFFNKR…DFINLSNAKK (81 aa).

This sequence belongs to the NAD-dependent DNA ligase family. LigA subfamily. Requires Mg(2+) as cofactor. It depends on Mn(2+) as a cofactor.

The enzyme catalyses NAD(+) + (deoxyribonucleotide)n-3'-hydroxyl + 5'-phospho-(deoxyribonucleotide)m = (deoxyribonucleotide)n+m + AMP + beta-nicotinamide D-nucleotide.. Functionally, DNA ligase that catalyzes the formation of phosphodiester linkages between 5'-phosphoryl and 3'-hydroxyl groups in double-stranded DNA using NAD as a coenzyme and as the energy source for the reaction. It is essential for DNA replication and repair of damaged DNA. The sequence is that of DNA ligase from Oenococcus oeni (strain ATCC BAA-331 / PSU-1).